The chain runs to 252 residues: Hydroxyacylglutathione hydrolase (252 aa).

Residues His54, His56, Asp58, His59, His111, Asp128, and His166 each coordinate Zn(2+).

The protein belongs to the metallo-beta-lactamase superfamily. Glyoxalase II family. In terms of assembly, monomer. Requires Zn(2+) as cofactor.

The enzyme catalyses an S-(2-hydroxyacyl)glutathione + H2O = a 2-hydroxy carboxylate + glutathione + H(+). It functions in the pathway secondary metabolite metabolism; methylglyoxal degradation; (R)-lactate from methylglyoxal: step 2/2. In terms of biological role, thiolesterase that catalyzes the hydrolysis of S-D-lactoyl-glutathione to form glutathione and D-lactic acid. The polypeptide is Hydroxyacylglutathione hydrolase (Vibrio vulnificus (strain CMCP6)).